The following is a 1090-amino-acid chain: Leucine--tRNA ligase, cytoplasmic (1090 aa).

At Ser-2 the chain carries N-acetylserine. A 'HIGH' region motif is present at residues 66 to 76 (PYMNGVMHAGH). Thr-142 carries the post-translational modification Phosphothreonine. A 'KMSKS' region motif is present at residues 729-733 (KMSKS). ATP is bound at residue Lys-732.

It belongs to the class-I aminoacyl-tRNA synthetase family.

It is found in the cytoplasm. It carries out the reaction tRNA(Leu) + L-leucine + ATP = L-leucyl-tRNA(Leu) + AMP + diphosphate. In Saccharomyces cerevisiae (strain ATCC 204508 / S288c) (Baker's yeast), this protein is Leucine--tRNA ligase, cytoplasmic (CDC60).